Consider the following 38-residue polypeptide: Large ribosomal subunit protein bL36A (38 aa).

This sequence belongs to the bacterial ribosomal protein bL36 family.

The protein is Large ribosomal subunit protein bL36A of Pectobacterium atrosepticum (strain SCRI 1043 / ATCC BAA-672) (Erwinia carotovora subsp. atroseptica).